The primary structure comprises 999 residues: Bifunctional glutamine synthetase adenylyltransferase/adenylyl-removing enzyme (999 aa).

An adenylyl removase region spans residues 1 to 493 (MFVRKPATER…LHAKLFYQPL (493 aa)). The tract at residues 498–999 (GHTALGIGEG…KAVVRKIFGG (502 aa)) is adenylyl transferase.

Belongs to the GlnE family. Mg(2+) is required as a cofactor.

The enzyme catalyses [glutamine synthetase]-O(4)-(5'-adenylyl)-L-tyrosine + phosphate = [glutamine synthetase]-L-tyrosine + ADP. It carries out the reaction [glutamine synthetase]-L-tyrosine + ATP = [glutamine synthetase]-O(4)-(5'-adenylyl)-L-tyrosine + diphosphate. Functionally, involved in the regulation of glutamine synthetase GlnA, a key enzyme in the process to assimilate ammonia. When cellular nitrogen levels are high, the C-terminal adenylyl transferase (AT) inactivates GlnA by covalent transfer of an adenylyl group from ATP to specific tyrosine residue of GlnA, thus reducing its activity. Conversely, when nitrogen levels are low, the N-terminal adenylyl removase (AR) activates GlnA by removing the adenylyl group by phosphorolysis, increasing its activity. The regulatory region of GlnE binds the signal transduction protein PII (GlnB) which indicates the nitrogen status of the cell. The polypeptide is Bifunctional glutamine synthetase adenylyltransferase/adenylyl-removing enzyme (Mycolicibacterium smegmatis (strain ATCC 700084 / mc(2)155) (Mycobacterium smegmatis)).